Here is a 207-residue protein sequence, read N- to C-terminus: Alpha-1-acid glycoprotein 8 (207 aa).

The N-terminal stretch at 1–18 (MALHTVLIMLSLLPMLEA) is a signal peptide. N-linked (GlcNAc...) asparagine glycosylation is found at Asn25, Asn34, Asn76, Asn94, and Asn104. A disulfide bond links Cys91 and Cys184.

The protein belongs to the calycin superfamily. Lipocalin family. Expressed by the liver and secreted in plasma.

It is found in the secreted. Its function is as follows. Functions as a transport protein in the blood stream. Binds various ligands in the interior of its beta-barrel domain. Appears to function in modulating the activity of the immune system during the acute-phase reaction. The sequence is that of Alpha-1-acid glycoprotein 8 (Orm8) from Mus caroli (Ryukyu mouse).